The chain runs to 247 residues: MAVRAQFENSNEVGVFARLTNSYAVVAIGASENFYSVFEAELQDVIPICHATIAGTRIVGRLTAGNRKGLLVPTTTTDQELQHLRNTLPDSVKIQRIEERLSALGNVICCNDHVALIHPDLERETEEIIADVLGVEVFRQTIADNVLTGSYMALSNQGGIVHPKTSIRDQDELSSLLQVPLVAGSVNRGSAVVGAGMVVNDWLAVTGLDTTATELSVIESVFRLGEMGPRGVGMGSTNKESIVESFY.

2 positions are modified to phosphoserine; by CK1: serine 174 and serine 175.

This sequence belongs to the eIF-6 family. Monomer. Associates with the 60S ribosomal subunit. Post-translationally, phosphorylation at Ser-174 and Ser-175 promotes nuclear export.

The protein localises to the cytoplasm. Its subcellular location is the nucleus. It is found in the nucleolus. Binds to the 60S ribosomal subunit and prevents its association with the 40S ribosomal subunit to form the 80S initiation complex in the cytoplasm. Is also involved in ribosome biogenesis. Associates with pre-60S subunits in the nucleus and is involved in its nuclear export. The protein is Eukaryotic translation initiation factor 6 (tif6) of Aspergillus oryzae (strain ATCC 42149 / RIB 40) (Yellow koji mold).